A 106-amino-acid chain; its full sequence is Urease subunit beta (106 aa).

The protein belongs to the urease beta subunit family. In terms of assembly, heterotrimer of UreA (gamma), UreB (beta) and UreC (alpha) subunits. Three heterotrimers associate to form the active enzyme.

It is found in the cytoplasm. It catalyses the reaction urea + 2 H2O + H(+) = hydrogencarbonate + 2 NH4(+). Its pathway is nitrogen metabolism; urea degradation; CO(2) and NH(3) from urea (urease route): step 1/1. The chain is Urease subunit beta from Citrobacter koseri (strain ATCC BAA-895 / CDC 4225-83 / SGSC4696).